The primary structure comprises 86 residues: Neurotoxin 8-related gene product 1/2/3 (86 aa).

The signal sequence occupies residues 1 to 19 (MNYLTMISLALLVMTGVES). The region spanning 22 to 84 (RDAYIADNKN…VPIKVPGKCN (63 aa)) is the LCN-type CS-alpha/beta domain. 4 disulfides stabilise this stretch: C32–C83, C36–C56, C42–C66, and C46–C68. The residue at position 84 (N84) is an Asparagine amide.

Belongs to the long (4 C-C) scorpion toxin superfamily. Sodium channel inhibitor family. Alpha subfamily. In terms of tissue distribution, expressed by the venom gland.

Its subcellular location is the secreted. In terms of biological role, binds voltage-dependently at site-3 of sodium channels (Nav) and inhibits the inactivation of the activated channels, thereby blocking neuronal transmission. The chain is Neurotoxin 8-related gene product 1/2/3 (NTVIIIrgp1) from Androctonus mauritanicus mauritanicus (Scorpion).